The primary structure comprises 418 residues: Glutamyl-tRNA reductase (418 aa).

Residues 49-52 (TCNR), Ser105, 110-112 (EPQ), and Gln116 each bind substrate. Catalysis depends on Cys50, which acts as the Nucleophile. 185 to 190 (GAGEMI) serves as a coordination point for NADP(+).

The protein belongs to the glutamyl-tRNA reductase family. As to quaternary structure, homodimer.

The enzyme catalyses (S)-4-amino-5-oxopentanoate + tRNA(Glu) + NADP(+) = L-glutamyl-tRNA(Glu) + NADPH + H(+). The protein operates within porphyrin-containing compound metabolism; protoporphyrin-IX biosynthesis; 5-aminolevulinate from L-glutamyl-tRNA(Glu): step 1/2. Catalyzes the NADPH-dependent reduction of glutamyl-tRNA(Glu) to glutamate 1-semialdehyde (GSA). The polypeptide is Glutamyl-tRNA reductase (Aromatoleum aromaticum (strain DSM 19018 / LMG 30748 / EbN1) (Azoarcus sp. (strain EbN1))).